A 196-amino-acid polypeptide reads, in one-letter code: Small ribosomal subunit protein uS4c (196 aa).

The disordered stretch occupies residues Ala-17–Phe-36. The 69-residue stretch at Met-89–Pro-157 folds into the S4 RNA-binding domain.

Belongs to the universal ribosomal protein uS4 family. Part of the 30S ribosomal subunit. Contacts protein S5. The interaction surface between S4 and S5 is involved in control of translational fidelity.

It localises to the plastid. The protein localises to the chloroplast. Its function is as follows. One of the primary rRNA binding proteins, it binds directly to 16S rRNA where it nucleates assembly of the body of the 30S subunit. In terms of biological role, with S5 and S12 plays an important role in translational accuracy. This is Small ribosomal subunit protein uS4c (rps4) from Calamagrostis epigeios (Wood small-reed grass).